A 174-amino-acid polypeptide reads, in one-letter code: Guided entry of tail-anchored proteins factor 1 (174 aa).

Over 1-8 the chain is Lumenal; it reads MSASETDR. A helical membrane pass occupies residues 9 to 29; that stretch reads WAWLLVLCFVFGCNVLRILLP. Residues 30–99 lie on the Cytoplasmic side of the membrane; it reads TLSSFISRVL…VKARTAQLAK (70 aa). A coiled-coil region spans residues 39–94; it reads LQKDAEQESQMRAEIQSMKQELSTVNMMDEFARYARLERKINKMTDKLKTHVKART. The interaction with GET3/TRC40 stretch occupies residues 39 to 97; the sequence is LQKDAEQESQMRAEIQSMKQELSTVNMMDEFARYARLERKINKMTDKLKTHVKARTAQL. Residues 100 to 120 form a helical membrane-spanning segment; that stretch reads IKWFISVAFYVLQAALMISLI. Residues 121–148 are Lumenal-facing; sequence WKYYSVPVAVVPSKWITPLDRLVAFPTR. The helical transmembrane segment at 149 to 169 threads the bilayer; it reads VAGGIGVTCWILVCNKVVAII. Residues 170 to 174 lie on the Cytoplasmic side of the membrane; that stretch reads LHPFS.

It belongs to the WRB/GET1 family. As to quaternary structure, component of the Golgi to ER traffic (GET) complex, which is composed of GET1, CAMLG/GET2 and GET3. Within the complex, GET1 and CAMLG form a heterotetramer which is stabilized by phosphatidylinositol binding and which binds to the GET3 homodimer. Interacts with CAMLG/GET2 (via C-terminus). GET3 shows a higher affinity for CAMLG than for GET1.

It is found in the endoplasmic reticulum membrane. Its function is as follows. Required for the post-translational delivery of tail-anchored (TA) proteins to the endoplasmic reticulum. Together with CAMLG/GET2, acts as a membrane receptor for soluble GET3/TRC40, which recognizes and selectively binds the transmembrane domain of TA proteins in the cytosol. Required to ensure correct topology and ER insertion of CAMLG. This chain is Guided entry of tail-anchored proteins factor 1, found in Rattus norvegicus (Rat).